Here is a 230-residue protein sequence, read N- to C-terminus: Orotidine 5'-phosphate decarboxylase (230 aa).

Substrate-binding positions include Asp-11, Lys-34, 61–70, Thr-117, Arg-179, Gln-188, Gly-208, and Arg-209; that span reads DLKLHDIPNT. Residue Lys-63 is the Proton donor of the active site.

Belongs to the OMP decarboxylase family. Type 1 subfamily. In terms of assembly, homodimer.

It catalyses the reaction orotidine 5'-phosphate + H(+) = UMP + CO2. It functions in the pathway pyrimidine metabolism; UMP biosynthesis via de novo pathway; UMP from orotate: step 2/2. Catalyzes the decarboxylation of orotidine 5'-monophosphate (OMP) to uridine 5'-monophosphate (UMP). The polypeptide is Orotidine 5'-phosphate decarboxylase (Streptococcus pyogenes serotype M18 (strain MGAS8232)).